A 314-amino-acid chain; its full sequence is 3'-5' exoribonuclease YhaM (314 aa).

The HD domain maps to 163–279 (HVVSMLDLAK…LHYIDNLDAK (117 aa)).

This sequence belongs to the YhaM family.

In terms of biological role, shows a 3'-5' exoribonuclease activity. The polypeptide is 3'-5' exoribonuclease YhaM (Bacillus thuringiensis (strain Al Hakam)).